The chain runs to 208 residues: Probable GTP-binding protein EngB (208 aa).

Residues 23–205 (LTSEMVILGR…RQTLLKYLLT (183 aa)) enclose the EngB-type G domain. Residues 31–38 (GRSNVGKS), 57–61 (GKTRL), 84–87 (DLPG), 154–157 (TKFD), and 182–184 (FNA) contribute to the GTP site. 2 residues coordinate Mg(2+): serine 38 and threonine 59.

It belongs to the TRAFAC class TrmE-Era-EngA-EngB-Septin-like GTPase superfamily. EngB GTPase family. Mg(2+) serves as cofactor.

Its function is as follows. Necessary for normal cell division and for the maintenance of normal septation. This chain is Probable GTP-binding protein EngB, found in Helicobacter pylori (strain G27).